A 398-amino-acid polypeptide reads, in one-letter code: 1-deoxy-D-xylulose 5-phosphate reductoisomerase (398 aa).

The NADPH site is built by Thr10, Gly11, Ser12, Ile13, Asn38, and Asn124. Residue Lys125 participates in 1-deoxy-D-xylulose 5-phosphate binding. NADPH is bound at residue Glu126. Mn(2+) is bound at residue Asp150. The 1-deoxy-D-xylulose 5-phosphate site is built by Ser151, Glu152, Ser186, and His209. Glu152 serves as a coordination point for Mn(2+). Gly215 contributes to the NADPH binding site. 4 residues coordinate 1-deoxy-D-xylulose 5-phosphate: Ser222, Asn227, Lys228, and Glu231. Position 231 (Glu231) interacts with Mn(2+).

This sequence belongs to the DXR family. It depends on Mg(2+) as a cofactor. The cofactor is Mn(2+).

It catalyses the reaction 2-C-methyl-D-erythritol 4-phosphate + NADP(+) = 1-deoxy-D-xylulose 5-phosphate + NADPH + H(+). Its pathway is isoprenoid biosynthesis; isopentenyl diphosphate biosynthesis via DXP pathway; isopentenyl diphosphate from 1-deoxy-D-xylulose 5-phosphate: step 1/6. Catalyzes the NADPH-dependent rearrangement and reduction of 1-deoxy-D-xylulose-5-phosphate (DXP) to 2-C-methyl-D-erythritol 4-phosphate (MEP). The polypeptide is 1-deoxy-D-xylulose 5-phosphate reductoisomerase (Baumannia cicadellinicola subsp. Homalodisca coagulata).